A 638-amino-acid chain; its full sequence is DNA gyrase subunit B (638 aa).

In terms of domain architecture, Toprim spans 431 to 545 (RELFIVEGNS…YGFVYIAQPP (115 aa)). Glu-437, Asp-510, and Asp-512 together coordinate Mg(2+).

This sequence belongs to the type II topoisomerase GyrB family. As to quaternary structure, heterotetramer, composed of two GyrA and two GyrB chains. In the heterotetramer, GyrA contains the active site tyrosine that forms a transient covalent intermediate with DNA, while GyrB binds cofactors and catalyzes ATP hydrolysis. It depends on Mg(2+) as a cofactor. Mn(2+) is required as a cofactor. Requires Ca(2+) as cofactor.

Its subcellular location is the cytoplasm. The catalysed reaction is ATP-dependent breakage, passage and rejoining of double-stranded DNA.. A type II topoisomerase that negatively supercoils closed circular double-stranded (ds) DNA in an ATP-dependent manner to modulate DNA topology and maintain chromosomes in an underwound state. Negative supercoiling favors strand separation, and DNA replication, transcription, recombination and repair, all of which involve strand separation. Also able to catalyze the interconversion of other topological isomers of dsDNA rings, including catenanes and knotted rings. Type II topoisomerases break and join 2 DNA strands simultaneously in an ATP-dependent manner. The chain is DNA gyrase subunit B from Metamycoplasma arthritidis (Mycoplasma arthritidis).